The following is a 213-amino-acid chain: LexA repressor (213 aa).

Residues 27–47 constitute a DNA-binding region (H-T-H motif); sequence QTEIARAFGFKGIRAAQYHLE. Residues S133 and K170 each act as for autocatalytic cleavage activity in the active site.

It belongs to the peptidase S24 family. As to quaternary structure, homodimer.

The enzyme catalyses Hydrolysis of Ala-|-Gly bond in repressor LexA.. Represses a number of genes involved in the response to DNA damage (SOS response), including recA and lexA. Has been shown to bind to the palindromic sequence 5'-CTG-N(8-12)-C-[TC]-G. In the presence of single-stranded DNA, RecA interacts with LexA causing an autocatalytic cleavage which disrupts the DNA-binding part of LexA, leading to derepression of the SOS regulon and eventually DNA repair. This is LexA repressor from Xanthomonas citri (Xanthomonas campestris pv. citri).